The following is a 477-amino-acid chain: Glutamate--tRNA ligase 1 (477 aa).

Residues Pro12–Asn22 carry the 'HIGH' region motif. The short motif at Pro253–Arg257 is the 'KMSKS' region element. Lys256 provides a ligand contact to ATP.

The protein belongs to the class-I aminoacyl-tRNA synthetase family. Glutamate--tRNA ligase type 1 subfamily. As to quaternary structure, monomer.

The protein resides in the cytoplasm. The catalysed reaction is tRNA(Glu) + L-glutamate + ATP = L-glutamyl-tRNA(Glu) + AMP + diphosphate. In terms of biological role, catalyzes the attachment of glutamate to tRNA(Glu) in a two-step reaction: glutamate is first activated by ATP to form Glu-AMP and then transferred to the acceptor end of tRNA(Glu). In Halorhodospira halophila (strain DSM 244 / SL1) (Ectothiorhodospira halophila (strain DSM 244 / SL1)), this protein is Glutamate--tRNA ligase 1.